Reading from the N-terminus, the 287-residue chain is Cbb3-type cytochrome c oxidase subunit FixP (287 aa).

Topologically, residues 1-33 (MSQKHIDELSGVETTGHEWDGIQELNNPMPRWW) are cytoplasmic. The helical transmembrane segment at 34-54 (IWTFYVTILWAIGYAIAYPAI) threads the bilayer. Residues 55–287 (PMITSATNGY…IFVHALGGGT (233 aa)) are Periplasmic-facing. Cytochrome c domains lie at 108–196 (FAIA…WGLT) and 203–284 (GLAA…HALG). Residues C121, C124, H125, M173, C216, C219, H220, and M261 each contribute to the heme c site.

It belongs to the CcoP / FixP family. In terms of assembly, component of the cbb3-type cytochrome c oxidase at least composed of FixN, FixO, FixQ and FixP. It depends on heme c as a cofactor.

It is found in the cell inner membrane. Its pathway is energy metabolism; oxidative phosphorylation. Its function is as follows. C-type cytochrome. Part of the cbb3-type cytochrome c oxidase complex. FixP subunit is required for transferring electrons from donor cytochrome c via its heme groups to FixO subunit. From there, electrons are shuttled to the catalytic binuclear center of FixN subunit where oxygen reduction takes place. The complex also functions as a proton pump. The protein is Cbb3-type cytochrome c oxidase subunit FixP of Rhizobium etli (strain ATCC 51251 / DSM 11541 / JCM 21823 / NBRC 15573 / CFN 42).